A 165-amino-acid chain; its full sequence is E3 ubiquitin ligase complex SCF subunit sconC (165 aa).

The interaction with the F-box domain of F-box proteins stretch occupies residues 106-165; that stretch reads ILAANYLDIKALLDVGCKTVANMIKGKSPEEIRKTFNIQNDFTPEEEDQIRRENEWAEDR.

Belongs to the SKP1 family. As to quaternary structure, component of the SCF (SKP1-CUL1-F-box protein) E3 ubiquitin ligase complexes.

It functions in the pathway protein modification; protein ubiquitination. Its function is as follows. Essential component of the SCF (SKP1-CUL1-F-box protein) E3 ubiquitin ligase complexes, which mediate the ubiquitination and subsequent proteasomal degradation of target proteins. Controls sulfur metabolite repression, probably by mediating the inactivation or degradation of the metR transcription factor. This chain is E3 ubiquitin ligase complex SCF subunit sconC (sconC), found in Arthroderma otae (strain ATCC MYA-4605 / CBS 113480) (Microsporum canis).